We begin with the raw amino-acid sequence, 215 residues long: Porin MspB (215 aa).

The N-terminal stretch at 1–31 (MTAFKRVLIAMISALLAGTTGMFVSAGAAHA) is a signal peptide.

Belongs to the mycobacterial porin (TC 1.B.24) family. In terms of assembly, octamers. Probably forms a goblet with the wide end on the exterior of the outer membrane and a central channel. It is not known if mixed oligomers of MspB with other Msp subunits form in vivo.

The protein localises to the cell outer membrane. Its subcellular location is the secreted. It localises to the cell wall. Its function is as follows. A backup porin induced when MspA, the major porin, is deleted. Probably forms a water-filled channel which favors the permeation of cations. There are about 2400 porins in wild-type, 800 in an mspA deletion and 150 in a double mspA-mspC deletion. A triple mspA-mspC-mspD deletion mutant has low but detectable channel activity. Different conductance values with maxima at 2.3 and 4.6 nanosiemens might be caused by a simultaneous reconstitution of MspB channels into the membrane or by the existence of different MspB conformations. The sequence is that of Porin MspB (mspB) from Mycolicibacterium smegmatis (strain ATCC 700084 / mc(2)155) (Mycobacterium smegmatis).